A 573-amino-acid polypeptide reads, in one-letter code: Methionine--tRNA ligase (573 aa).

A 'HIGH' region motif is present at residues 10–20; that stretch reads PYVNSVPHLGN. Positions 143, 146, 156, and 159 each coordinate Zn(2+). A 'KMSKS' region motif is present at residues 333 to 337; sequence KFSKS. K336 provides a ligand contact to ATP.

This sequence belongs to the class-I aminoacyl-tRNA synthetase family. MetG type 1 subfamily. Requires Zn(2+) as cofactor.

It localises to the cytoplasm. The catalysed reaction is tRNA(Met) + L-methionine + ATP = L-methionyl-tRNA(Met) + AMP + diphosphate. Its function is as follows. Is required not only for elongation of protein synthesis but also for the initiation of all mRNA translation through initiator tRNA(fMet) aminoacylation. The protein is Methionine--tRNA ligase of Saccharolobus islandicus (strain M.14.25 / Kamchatka #1) (Sulfolobus islandicus).